A 247-amino-acid chain; its full sequence is Carbonic anhydrase (247 aa).

The signal sequence occupies residues methionine 1 to alanine 34. A substrate-binding site is contributed by arginine 93–aspartate 95. The Proton donor/acceptor role is filled by glutamate 96. Glutamine 109–aspartate 110 contributes to the substrate binding site. Histidine 115 contributes to the Zn(2+) binding site. The active site involves glutamate 118. Zn(2+) is bound by residues histidine 151 and histidine 156. Asparagine 236 is a binding site for substrate.

The protein belongs to the gamma-class carbonic anhydrase family. In terms of assembly, homotrimer. Requires Zn(2+) as cofactor.

The protein resides in the secreted. It catalyses the reaction hydrogencarbonate + H(+) = CO2 + H2O. Reversible hydration of carbon dioxide. Important for growth on acetate. As a probably extracellular enzyme, it may support a H(+)/CH(3)COO(-) symport mechanism and/or conversion of CO(2) to HCO(3)(-), removing excess CO(2) produced by growth on acetate. This chain is Carbonic anhydrase, found in Methanosarcina thermophila (strain ATCC 43570 / DSM 1825 / OCM 12 / VKM B-1830 / TM-1).